We begin with the raw amino-acid sequence, 376 residues long: Glutamate 5-kinase (376 aa).

Lysine 10 is a binding site for ATP. Substrate contacts are provided by serine 50, aspartate 137, and asparagine 149. Position 169–170 (threonine 169–aspartate 170) interacts with ATP. The PUA domain occupies arginine 275 to methionine 353.

It belongs to the glutamate 5-kinase family.

It localises to the cytoplasm. It catalyses the reaction L-glutamate + ATP = L-glutamyl 5-phosphate + ADP. Its pathway is amino-acid biosynthesis; L-proline biosynthesis; L-glutamate 5-semialdehyde from L-glutamate: step 1/2. Its function is as follows. Catalyzes the transfer of a phosphate group to glutamate to form L-glutamate 5-phosphate. This Alcanivorax borkumensis (strain ATCC 700651 / DSM 11573 / NCIMB 13689 / SK2) protein is Glutamate 5-kinase.